A 465-amino-acid polypeptide reads, in one-letter code: ATP synthase subunit beta 2 (465 aa).

148–155 (GGAGVGKT) contributes to the ATP binding site.

Belongs to the ATPase alpha/beta chains family. In terms of assembly, F-type ATPases have 2 components, CF(1) - the catalytic core - and CF(0) - the membrane proton channel. CF(1) has five subunits: alpha(3), beta(3), gamma(1), delta(1), epsilon(1). CF(0) has three main subunits: a(1), b(2) and c(9-12). The alpha and beta chains form an alternating ring which encloses part of the gamma chain. CF(1) is attached to CF(0) by a central stalk formed by the gamma and epsilon chains, while a peripheral stalk is formed by the delta and b chains.

It localises to the cell inner membrane. It carries out the reaction ATP + H2O + 4 H(+)(in) = ADP + phosphate + 5 H(+)(out). Its function is as follows. Produces ATP from ADP in the presence of a proton gradient across the membrane. The catalytic sites are hosted primarily by the beta subunits. The sequence is that of ATP synthase subunit beta 2 from Psychromonas ingrahamii (strain DSM 17664 / CCUG 51855 / 37).